Here is a 299-residue protein sequence, read N- to C-terminus: Nucleoporin POM34 (299 aa).

The tract at residues 1–39 is disordered; sequence MKIQAGQLGLDDNDVPGPLPDTDSKPSSQSQNDTPMFKL. Over residues 25–34 the composition is skewed to polar residues; that stretch reads KPSSQSQNDT. The next 2 membrane-spanning stretches (helical) occupy residues 64-84 and 133-153; these read IMTNVIAFAFWNLLVKFIKFF and LFHLLISLNILFSLWKLLSTV. A Phosphoserine modification is found at Ser270. The residue at position 273 (Thr273) is a Phosphothreonine. Phosphoserine is present on residues Ser292 and Ser294.

In terms of assembly, component of the nuclear pore complex (NPC). NPC constitutes the exclusive means of nucleocytoplasmic transport. NPCs allow the passive diffusion of ions and small molecules and the active, nuclear transport receptor-mediated bidirectional transport of macromolecules such as proteins, RNAs, ribonucleoparticles (RNPs), and ribosomal subunits across the nuclear envelope. Due to its 8-fold rotational symmetry, all subunits are present with 8 copies or multiples thereof.

It localises to the nucleus. It is found in the nuclear pore complex. Its subcellular location is the nucleus membrane. Functionally, functions as a component of the nuclear pore complex (NPC). NPC components, collectively referred to as nucleoporins (NUPs), can play the role of both NPC structural components and of docking or interaction partners for transiently associated nuclear transport factors. The polypeptide is Nucleoporin POM34 (POM34) (Saccharomyces cerevisiae (strain ATCC 204508 / S288c) (Baker's yeast)).